The sequence spans 688 residues: Glycine--tRNA ligase beta subunit (688 aa).

Belongs to the class-II aminoacyl-tRNA synthetase family. As to quaternary structure, tetramer of two alpha and two beta subunits.

The protein resides in the cytoplasm. It catalyses the reaction tRNA(Gly) + glycine + ATP = glycyl-tRNA(Gly) + AMP + diphosphate. The protein is Glycine--tRNA ligase beta subunit of Lactobacillus delbrueckii subsp. bulgaricus (strain ATCC BAA-365 / Lb-18).